The chain runs to 405 residues: MENIMTLPKIKQVRAWFTGGATAEKGAGGGDYHDQGANHWIDDHIATPMSKYRDYEQSRQSFGINVLGTLVVEVEAENGQTGFAVSTAGEMGCFIVEKHLNRFIEGKCVSDIKLIHDQMLSATLYYSGSGGLVMNTISCVDLALWDLFGKVVGLPVYKLLGGAVRDEIQFYATGARPDLAKEMGFIGGKMPTHWGPHDGDAGIRKDAAMVADMREKCGEDFWLMLDCWMSQDVNYATKLAHACAPYNLKWIEECLPPQQYESYRELKRNAPVGMMVTSGEHHGTLQSFRTLSETGIDIMQPDVGWCGGLTTLVEIAAIAKSRGQLVVPHGSSVYSHHAVITFTNTPFSEFLMTSPDCSTMRPQFDPILLNEPVPVNGRIHKSVLDKPGFGVELNRDCNLKRPYSH.

Histidine 33 and arginine 59 together coordinate substrate. 3 residues coordinate Mg(2+): aspartate 226, glutamate 252, and glutamate 280. Histidine 329 (proton acceptor) is an active-site residue. Substrate is bound at residue glutamate 349.

Belongs to the mandelate racemase/muconate lactonizing enzyme family. RhamD subfamily. As to quaternary structure, homooctamer; tetramer of dimers. It depends on Mg(2+) as a cofactor.

It catalyses the reaction L-rhamnonate = 2-dehydro-3-deoxy-L-rhamnonate + H2O. Functionally, catalyzes the dehydration of L-rhamnonate to 2-keto-3-deoxy-L-rhamnonate (KDR). This chain is L-rhamnonate dehydratase, found in Escherichia coli (strain K12 / DH10B).